The chain runs to 443 residues: D-serine dehydratase (443 aa).

The residue at position 118 (K118) is an N6-(pyridoxal phosphate)lysine.

This sequence belongs to the serine/threonine dehydratase family. DsdA subfamily. Monomer. Requires pyridoxal 5'-phosphate as cofactor.

The catalysed reaction is D-serine = pyruvate + NH4(+). The chain is D-serine dehydratase from Photorhabdus laumondii subsp. laumondii (strain DSM 15139 / CIP 105565 / TT01) (Photorhabdus luminescens subsp. laumondii).